The following is a 177-amino-acid chain: MSEFTTVARPYAKAAFDFAVEHQSVDRWQQMLAFAASVASNEQMTDLLSGALAPEALSETFIAICGDQLDEAGQNLIKVMAENGRLPTLTAVLEQFIQLRAAHDATAEVEVISSTTLSDEQLTKISAAMEKRLSRKVKLNCKIDKSVMAGVIIRAGDMVIDGSVRGRLERLADVLQS.

Belongs to the ATPase delta chain family. F-type ATPases have 2 components, F(1) - the catalytic core - and F(0) - the membrane proton channel. F(1) has five subunits: alpha(3), beta(3), gamma(1), delta(1), epsilon(1). F(0) has three main subunits: a(1), b(2) and c(10-14). The alpha and beta chains form an alternating ring which encloses part of the gamma chain. F(1) is attached to F(0) by a central stalk formed by the gamma and epsilon chains, while a peripheral stalk is formed by the delta and b chains.

It localises to the cell inner membrane. Its function is as follows. F(1)F(0) ATP synthase produces ATP from ADP in the presence of a proton or sodium gradient. F-type ATPases consist of two structural domains, F(1) containing the extramembraneous catalytic core and F(0) containing the membrane proton channel, linked together by a central stalk and a peripheral stalk. During catalysis, ATP synthesis in the catalytic domain of F(1) is coupled via a rotary mechanism of the central stalk subunits to proton translocation. This protein is part of the stalk that links CF(0) to CF(1). It either transmits conformational changes from CF(0) to CF(1) or is implicated in proton conduction. This Erwinia tasmaniensis (strain DSM 17950 / CFBP 7177 / CIP 109463 / NCPPB 4357 / Et1/99) protein is ATP synthase subunit delta.